The chain runs to 662 residues: Protein distal antenna (662 aa).

One can recognise an HTH psq-type domain in the interval 21–72 (TKGKRPLRHLTATDKIDAIQRIHDGESKASVARDIGVPESTLRGWCKNEEKL). A DNA-binding region (H-T-H motif) is located at residues 48–68 (KASVARDIGVPESTLRGWCKN). 4 disordered regions span residues 265 to 299 (RNAR…STPS), 348 to 407 (YSQM…PEDT), 491 to 537 (PEDL…DDEV), and 558 to 596 (QSSP…KSTC). A compositionally biased stretch (low complexity) spans 349 to 391 (SQMPRPSSPQQPQSTPPTTTTTQQQQPQSSTPPTATPPIVSTP). Residues 511–520 (FNPSPSTSIK) show a composition bias toward polar residues. Positions 527-536 (VDEDEDEDDE) are enriched in acidic residues.

As to quaternary structure, homomers. Interacts with itself, danr, ey and dac to form a complex (or complexes) containing the RD factors.

It localises to the nucleus. In terms of biological role, probable transcription factor with a role in the retinal determination (RD) network. Contributes to differentiation of antenna-specific characteristics. This is Protein distal antenna from Culex quinquefasciatus (Southern house mosquito).